Consider the following 60-residue polypeptide: MSFDKKLLEIVACPVCKGKLDYEKSSQRLICKADHLAYPINDGIPVLLENKAERWQEAEA.

The protein belongs to the UPF0434 family.

The polypeptide is UPF0434 protein Ssed_2824 (Shewanella sediminis (strain HAW-EB3)).